A 636-amino-acid polypeptide reads, in one-letter code: Threonine--tRNA ligase (636 aa).

The region spanning 1–63 (MNEINVTLPD…ADGARVEIVT (63 aa)) is the TGS domain. A catalytic region spans residues 243-534 (DHRKLGRELD…LIEHFAGNFP (292 aa)). Positions 335, 386, and 511 each coordinate Zn(2+).

The protein belongs to the class-II aminoacyl-tRNA synthetase family. As to quaternary structure, homodimer. The cofactor is Zn(2+).

The protein resides in the cytoplasm. It carries out the reaction tRNA(Thr) + L-threonine + ATP = L-threonyl-tRNA(Thr) + AMP + diphosphate + H(+). Its function is as follows. Catalyzes the attachment of threonine to tRNA(Thr) in a two-step reaction: L-threonine is first activated by ATP to form Thr-AMP and then transferred to the acceptor end of tRNA(Thr). Also edits incorrectly charged L-seryl-tRNA(Thr). This Geobacter sp. (strain M21) protein is Threonine--tRNA ligase.